The chain runs to 115 residues: Pro-FMRFamide-related neuropeptide FF (115 aa).

Positions 1–22 (MDARQAAALLLVLLLVTDWSHA) are cleaved as a signal peptide. 2 disordered regions span residues 20–51 (SHAE…AQTP) and 78–102 (FGRN…LSSP). The propeptide occupies 23–66 (EGPGGRDGGDQIFMEEDSGAHPAQDAQTPRSLLRSLLQAMQRPG). F78 is modified (phenylalanine amide). The propeptide occupies 81-94 (NTRGSWSNKRLSPR). Position 112 is a phenylalanine amide (F112).

It belongs to the FARP (FMRFamide related peptide) family.

Its subcellular location is the secreted. Morphine modulating peptides. Have wide-ranging physiologic effects, including the modulation of morphine-induced analgesia, elevation of arterial blood pressure, and increased somatostatin secretion from the pancreas. The neuropeptide FF potentiates and sensitizes ASIC3 cation channel. In Bos taurus (Bovine), this protein is Pro-FMRFamide-related neuropeptide FF (NPFF).